Reading from the N-terminus, the 51-residue chain is Nawaprin (51 aa).

Residues 1-50 form the WAP domain; that stretch reads NEKSGSCPDMSMPIPPLGICKTLCNSDSGCPNVQKCCKNGCGFMTCTTPV. 4 disulfide bridges follow: cysteine 7–cysteine 37, cysteine 20–cysteine 41, cysteine 24–cysteine 36, and cysteine 30–cysteine 46.

In terms of tissue distribution, expressed by the venom gland.

The protein localises to the secreted. In terms of biological role, damages membranes of susceptible bacteria. Has no hemolytic activity. Not toxic to mice. Does not inhibit the proteinases elastase and cathepsin G. The polypeptide is Nawaprin (Naja nigricollis (Black-necked spitting cobra)).